The chain runs to 230 residues: Acyl-protein thioesterase 1 (230 aa).

Active-site charge relay system residues include serine 119, aspartate 174, and histidine 208. N6-acetyllysine is present on lysine 224.

It belongs to the AB hydrolase superfamily. AB hydrolase 2 family. Homodimer. As to expression, ubiquitous. Detected at low levels in all tissues tested.

The protein resides in the cytoplasm. It localises to the cell membrane. It is found in the nucleus membrane. The protein localises to the endoplasmic reticulum. It catalyses the reaction S-hexadecanoyl-L-cysteinyl-[protein] + H2O = L-cysteinyl-[protein] + hexadecanoate + H(+). The catalysed reaction is 1-hexadecanoyl-sn-glycero-3-phosphocholine + H2O = sn-glycerol 3-phosphocholine + hexadecanoate + H(+). It carries out the reaction a 1-(9Z-octadecenoyl)-2-acyl-sn-glycero-3-phosphocholine + H2O = a 2-acyl-sn-glycero-3-phosphocholine + (9Z)-octadecenoate + H(+). In terms of biological role, acts as an acyl-protein thioesterase. Hydrolyzes fatty acids from S-acylated cysteine residues in proteins such as trimeric G alpha proteins or HRAS. Acts as a palmitoyl thioesterase that catalyzes depalmitoylation of proteins, such as ADRB2, KCNMA1 and SQSTM1. Acts as a negative regulator of autophagy by mediating palmitoylation of SQSTM1, decreasing affinity between SQSTM1 and ATG8 proteins and recruitment of ubiquitinated cargo proteins to autophagosomes. Acts as a lysophospholipase and hydrolyzes lysophosphatidylcholine (lyso-PC). Also hydrolyzes lysophosphatidylethanolamine (lyso-PE), lysophosphatidylinositol (lyso-PI) and lysophosphatidylserine (lyso-PS). Has much higher thioesterase activity than lysophospholipase activity. Contributes to the production of lysophosphatidic acid (LPA) during blood coagulation by recognizing and cleaving plasma phospholipids to generate lysophospholipids which in turn act as substrates for ENPP2 to produce LPA. This is Acyl-protein thioesterase 1 (Lypla1) from Rattus norvegicus (Rat).